The chain runs to 815 residues: Phenylalanine--tRNA ligase beta subunit (815 aa).

The region spanning 39–148 (ATELQKFEVA…EYAVVGDNFT (110 aa)) is the tRNA-binding domain. In terms of domain architecture, B5 spans 420 to 495 (LQKIPLDFSV…RIYGYDKIES (76 aa)). The Mg(2+) site is built by aspartate 473, aspartate 479, glutamate 482, and glutamate 483. The region spanning 721-814 (SDFQANFRDY…ISQKFQGTLR (94 aa)) is the FDX-ACB domain.

The protein belongs to the phenylalanyl-tRNA synthetase beta subunit family. Type 1 subfamily. In terms of assembly, tetramer of two alpha and two beta subunits. Requires Mg(2+) as cofactor.

The protein localises to the cytoplasm. The catalysed reaction is tRNA(Phe) + L-phenylalanine + ATP = L-phenylalanyl-tRNA(Phe) + AMP + diphosphate + H(+). The chain is Phenylalanine--tRNA ligase beta subunit from Rickettsia typhi (strain ATCC VR-144 / Wilmington).